The primary structure comprises 378 residues: MLRRKRAFTDESLMLMERGLPRLVTTSTTPTPTTEPTTEPTTTKDETSQTSATDASTATTSTAATSTAATSSTSTDITATSLTITSSSLSTDVANIVPPSAENNPYIFRTSALSGTVFIAVGSIAGAILMLIFLWWSITKYLNYKRTKKDYLESMATQYPYGSRGGHAHHSSIFSTASSDVYSYGGDDEKLSLGHSRSQSVDKKTHEKVKKSKIGLFGGSTNDIFKTPTRNDSWESLSDAITNYGDGSVHRFNPIQDDIQYNNRRSLFISPTVEVMNLPRQEVPDIFATPKKQQTSIYNDYDTPLIPDLSKPEDVALSPQRSHRKTPSNDKYHRRNRSSANLSPSRSPTRTPIRTRNMARDHRKTPSMYLEDLLDDNY.

Residues 18–70 are disordered; it reads RGLPRLVTTSTTPTPTTEPTTEPTTTKDETSQTSATDASTATTSTAATSTAAT. 2 stretches are compositionally biased toward low complexity: residues 25-41 and 48-70; these read TTST…TEPT and SQTS…TAAT. Residues 118 to 138 traverse the membrane as a helical segment; that stretch reads FIAVGSIAGAILMLIFLWWSI. Positions 299 to 368 are disordered; that stretch reads NDYDTPLIPD…ARDHRKTPSM (70 aa). A compositionally biased stretch (basic residues) spans 321–337; that stretch reads RSHRKTPSNDKYHRRNR. The span at 343–356 shows a compositional bias: low complexity; the sequence is SPSRSPTRTPIRTR.

The protein belongs to the PRM5 family.

Its subcellular location is the vacuole membrane. This is Vacuolar membrane protein CAGL0J10076g from Candida glabrata (strain ATCC 2001 / BCRC 20586 / JCM 3761 / NBRC 0622 / NRRL Y-65 / CBS 138) (Yeast).